An 847-amino-acid polypeptide reads, in one-letter code: B-cell receptor CD22 (847 aa).

The N-terminal stretch at 1 to 19 (MHLLGPWLLLLVLEYLAFS) is a signal peptide. The Ig-like V-type domain occupies 20–138 (DSSKWAFEHP…MERIHLNVSE (119 aa)). Residues 20–687 (DSSKWAFEHP…YYSPETIGRR (668 aa)) lie on the Extracellular side of the membrane. N-linked (GlcNAc...) asparagine glycans are attached at residues asparagine 67, asparagine 101, and asparagine 112. Arginine 120 is an N-acetylneuraminate binding site. N-linked (GlcNAc...) asparagine glycosylation is found at asparagine 135, asparagine 164, and asparagine 231. 6 consecutive Ig-like C2-type domains span residues 143 to 235 (PHIQ…DTVQ), 242 to 326 (PKLE…VFLQ), 331 to 416 (PEPS…LDVQ), 419 to 500 (PKKV…VALN), 505 to 582 (PRDV…QTAS), and 593 to 676 (PRRL…STLT). An intrachain disulfide couples cysteine 161 to cysteine 219. Intrachain disulfides connect cysteine 265–cysteine 309 and cysteine 353–cysteine 396. Residues asparagine 363, asparagine 428, asparagine 445, asparagine 448, and asparagine 479 are each glycosylated (N-linked (GlcNAc...) asparagine). 2 cysteine pairs are disulfide-bonded: cysteine 442–cysteine 484 and cysteine 529–cysteine 571. Residues asparagine 574 and asparagine 634 are each glycosylated (N-linked (GlcNAc...) asparagine). Cysteine 616 and cysteine 659 are disulfide-bonded. The helical transmembrane segment at 688–708 (VAVGFGSCLAILILAICGLKL) threads the bilayer. Over 709 to 847 (QRRWKRTQSQ…ENVDYVILKH (139 aa)) the chain is Cytoplasmic. Phosphoserine occurs at positions 725, 726, and 729. Short sequence motifs (ITIM motif) lie at residues 760 to 765 (ISYTTL) and 794 to 799 (VTYSVL). Tyrosine 762 carries the phosphotyrosine modification. Phosphotyrosine occurs at positions 807, 822, and 842. 2 consecutive short sequence motifs (ITIM motif) follow at residues 820-825 (IHYSEL) and 840-845 (VDYVIL).

The protein belongs to the immunoglobulin superfamily. SIGLEC (sialic acid binding Ig-like lectin) family. Predominantly monomer of isoform CD22-beta. Also found as heterodimer of isoform CD22-beta and a shorter isoform. Interacts with PTPN6/SHP-1, LYN, SYK, PIK3R1/PIK3R2 and PLCG1 upon phosphorylation. Interacts with GRB2, INPP5D and SHC1 upon phosphorylation. May form a complex with INPP5D/SHIP, GRB2 and SHC1. Post-translationally, phosphorylation of Tyr-762, Tyr-807 and Tyr-822 are involved in binding to SYK, GRB2 and SYK, respectively. Phosphorylation of Tyr-842 is involved in binding to SYK, PLCG2 and PIK3R1/PIK3R2. Phosphorylated on tyrosine residues by LYN.

It localises to the cell membrane. Its function is as follows. Most highly expressed siglec (sialic acid-binding immunoglobulin-like lectin) on B-cells that plays a role in various aspects of B-cell biology including differentiation, antigen presentation, and trafficking to bone marrow. Binds to alpha 2,6-linked sialic acid residues of surface molecules such as CD22 itself, CD45 and IgM in a cis configuration. Can also bind to ligands on other cells as an adhesion molecule in a trans configuration. Acts as an inhibitory coreceptor on the surface of B-cells and inhibits B-cell receptor induced signaling, characterized by inhibition of the calcium mobilization and cellular activation. Mechanistically, the immunoreceptor tyrosine-based inhibitory motif domain is phosphorylated by the Src kinase LYN, which in turn leads to the recruitment of the protein tyrosine phosphatase 1/PTPN6, leading to the negative regulation of BCR signaling. If this negative signaling from is of sufficient strength, apoptosis of the B-cell can be induced. The protein is B-cell receptor CD22 of Pan troglodytes (Chimpanzee).